Here is a 371-residue protein sequence, read N- to C-terminus: Histidinol-phosphate aminotransferase 2 (371 aa).

Residue Lys-232 is modified to N6-(pyridoxal phosphate)lysine.

Belongs to the class-II pyridoxal-phosphate-dependent aminotransferase family. Histidinol-phosphate aminotransferase subfamily. Homodimer. Pyridoxal 5'-phosphate serves as cofactor.

It carries out the reaction L-histidinol phosphate + 2-oxoglutarate = 3-(imidazol-4-yl)-2-oxopropyl phosphate + L-glutamate. It participates in amino-acid biosynthesis; L-histidine biosynthesis; L-histidine from 5-phospho-alpha-D-ribose 1-diphosphate: step 7/9. This is Histidinol-phosphate aminotransferase 2 from Methylococcus capsulatus (strain ATCC 33009 / NCIMB 11132 / Bath).